A 502-amino-acid chain; its full sequence is Reduced meiotic recombination protein C1442.04c (502 aa).

Phosphoserine occurs at positions 328, 330, and 331. Disordered regions lie at residues Asn-353–Asn-391, Gly-420–Asp-440, and Glu-454–Asp-502. Residues Asp-367–Asp-378 show a composition bias toward acidic residues. Polar residues-rich tracts occupy residues Gly-420–Gly-436 and Gly-462–Thr-477.

The protein belongs to the RMR1 family.

It is found in the cytoplasm. It localises to the nucleus. Required for normal levels of gene conversion events during meiosis. This Schizosaccharomyces pombe (strain 972 / ATCC 24843) (Fission yeast) protein is Reduced meiotic recombination protein C1442.04c.